Consider the following 305-residue polypeptide: Glycine--tRNA ligase alpha subunit (305 aa).

The protein belongs to the class-II aminoacyl-tRNA synthetase family. Tetramer of two alpha and two beta subunits.

The protein resides in the cytoplasm. It carries out the reaction tRNA(Gly) + glycine + ATP = glycyl-tRNA(Gly) + AMP + diphosphate. The polypeptide is Glycine--tRNA ligase alpha subunit (Streptococcus pyogenes serotype M49 (strain NZ131)).